Reading from the N-terminus, the 102-residue chain is RNA-binding protein Hfq (102 aa).

The Sm domain occupies 9-68 (DPFLNALRRERVPVSIYLVNGIKLQGQIESFDQFVILLKNTVSQMVYKHAISTVVPSRPV). The tract at residues 63-102 (VPSRPVSHHSNNAGGGASNNYHHGSNVQGSTAQQDSEETE) is disordered. The segment covering 70–88 (HHSNNAGGGASNNYHHGSN) has biased composition (low complexity).

The protein belongs to the Hfq family. As to quaternary structure, homohexamer.

RNA chaperone that binds small regulatory RNA (sRNAs) and mRNAs to facilitate mRNA translational regulation in response to envelope stress, environmental stress and changes in metabolite concentrations. Also binds with high specificity to tRNAs. The sequence is that of RNA-binding protein Hfq from Salmonella choleraesuis (strain SC-B67).